The primary structure comprises 219 residues: Adenylate kinase (219 aa).

13-18 (GAGKGT) serves as a coordination point for ATP. The segment at 33–62 (STGDIFRAAIKNETKMGLEAKKYIDAGNLV) is NMP. AMP contacts are provided by residues Thr-34, Arg-39, 60–62 (NLV), 88–91 (GYPR), and Gln-95. The LID stretch occupies residues 129–167 (GRFICRTCGATYHKLYNKPKVEGTCDVCGGHDFYQRDDD). Arg-130 contacts ATP. Zn(2+) contacts are provided by Cys-133 and Cys-136. 139–140 (TY) lines the ATP pocket. Zn(2+)-binding residues include Cys-153 and Cys-156. Positions 164 and 175 each coordinate AMP. Residue Arg-203 participates in ATP binding.

It belongs to the adenylate kinase family. In terms of assembly, monomer.

Its subcellular location is the cytoplasm. It carries out the reaction AMP + ATP = 2 ADP. It functions in the pathway purine metabolism; AMP biosynthesis via salvage pathway; AMP from ADP: step 1/1. In terms of biological role, catalyzes the reversible transfer of the terminal phosphate group between ATP and AMP. Plays an important role in cellular energy homeostasis and in adenine nucleotide metabolism. In Lactiplantibacillus plantarum (strain ATCC BAA-793 / NCIMB 8826 / WCFS1) (Lactobacillus plantarum), this protein is Adenylate kinase.